Consider the following 432-residue polypeptide: Phosphoribosylamine--glycine ligase (432 aa).

An ATP-grasp domain is found at 110-316 (RNFMKDNDIE…MIDVMSAVVN (207 aa)). 137-194 (IEELGSVAIKPAGLTGGKGVKVMGDQLPDTGAAYDYAVSLLDGDNVVVEENLVGEEFT) is an ATP binding site. Q274, E286, and N288 together coordinate Mg(2+). Mn(2+) is bound by residues Q274, E286, and N288.

Belongs to the GARS family. Mg(2+) serves as cofactor. It depends on Mn(2+) as a cofactor.

It carries out the reaction 5-phospho-beta-D-ribosylamine + glycine + ATP = N(1)-(5-phospho-beta-D-ribosyl)glycinamide + ADP + phosphate + H(+). The protein operates within purine metabolism; IMP biosynthesis via de novo pathway; N(1)-(5-phospho-D-ribosyl)glycinamide from 5-phospho-alpha-D-ribose 1-diphosphate: step 2/2. The protein is Phosphoribosylamine--glycine ligase of Methanococcoides burtonii (strain DSM 6242 / NBRC 107633 / OCM 468 / ACE-M).